The chain runs to 333 residues: Mitochondrial fission regulator 1 (333 aa).

The N-terminal 48 residues, 1–48 (MLGWIKRLIRMVFQQVGVSMQSVLWSRKPYGSSRSIVRKIGTNLSLIQ), are a transit peptide targeting the mitochondrion. The residue at position 119 (S119) is a Phosphoserine. Residues 137-169 (NEEALQKICALENELAALRAQIAKIVTQQEQQN) are a coiled coil. 2 disordered regions span residues 177-198 (STTF…PPPA) and 288-315 (SDSQ…FGPH). Residues 179–304 (TFGTIPPHPP…EKGIPKSESE (126 aa)) form a necessary and sufficient to promote mitochondrial fission region. Over residues 184 to 198 (PPHPPPPPPPLPPPA) the composition is skewed to pro residues. The segment covering 288–307 (SDSQDEVEKGIPKSESEATS) has biased composition (basic and acidic residues).

The protein belongs to the MTFR1 family.

The protein localises to the mitochondrion. May play a role in mitochondrial aerobic respiration. May also regulate mitochondrial organization and fission. This is Mitochondrial fission regulator 1 (MTFR1) from Homo sapiens (Human).